Here is a 546-residue protein sequence, read N- to C-terminus: Chaperonin GroEL (546 aa).

ATP is bound by residues 29-32 (TLGP), lysine 50, 86-90 (DGTTT), glycine 415, and aspartate 495.

It belongs to the chaperonin (HSP60) family. Forms a cylinder of 14 subunits composed of two heptameric rings stacked back-to-back. Interacts with the co-chaperonin GroES.

It is found in the cytoplasm. The catalysed reaction is ATP + H2O + a folded polypeptide = ADP + phosphate + an unfolded polypeptide.. Its function is as follows. Together with its co-chaperonin GroES, plays an essential role in assisting protein folding. The GroEL-GroES system forms a nano-cage that allows encapsulation of the non-native substrate proteins and provides a physical environment optimized to promote and accelerate protein folding. The sequence is that of Chaperonin GroEL from Parabacteroides distasonis (strain ATCC 8503 / DSM 20701 / CIP 104284 / JCM 5825 / NCTC 11152).